Here is a 247-residue protein sequence, read N- to C-terminus: Carboxy-S-adenosyl-L-methionine synthase (247 aa).

Residues Tyr39, 64–66 (GCS), 89–90 (DN), 117–118 (DI), Asn132, and Arg199 contribute to the S-adenosyl-L-methionine site.

Belongs to the class I-like SAM-binding methyltransferase superfamily. Cx-SAM synthase family. Homodimer.

The enzyme catalyses prephenate + S-adenosyl-L-methionine = carboxy-S-adenosyl-L-methionine + 3-phenylpyruvate + H2O. Catalyzes the conversion of S-adenosyl-L-methionine (SAM) to carboxy-S-adenosyl-L-methionine (Cx-SAM). The sequence is that of Carboxy-S-adenosyl-L-methionine synthase from Escherichia coli O127:H6 (strain E2348/69 / EPEC).